Here is a 553-residue protein sequence, read N- to C-terminus: MSDIALTVSVLALVAVVGLWIGNIKVRGVGFGIGGVLFGGIIVGHFVDQAGVTLSGDMLHFIQEFGLILFVYTIGIQVGPGFFASLRVSGLRLNLFAVLIVIMGGLVTAILHKIFAIPLPVVLGIFSGAVTNTPALGAGQQILRDLGTPVDLVDQMGMSYAMAYPFGICGILLTMWLMRLIFRVNVEAEAQKHESSLANGHSLIQTMNIRVENPNLNNMAIQDVPILNSDKIICSRLKRDDTLMVPSPGTIIQAGDLLHLVGQSTDLHNAQLVIGKEVDTSLSTRGTDLRVERVVVTNEKVLGKRIRDLHFKERYDVVISRLNRAGVELVASSDASLQFGDILNLVGRPASIDAVANVVGNAQQKLQQVQMLPVFIGIGLGVLLGSIPLFVPGFPVALKLGLAGGPLIMALILGRIGSIGKLYWFMPPSANLALRELGIVLFLAVVGLKSGGDFVDTLTQGEGLSWIGYGIFITAIPLITIGLLARIFAKMNYLTLCGMLAGSMTDPPALAFANNLHATSGAAALSYATVYPLVMFLRIITPQLLAVIFWGMG.

The next 5 membrane-spanning stretches (helical) occupy residues 4-24, 28-48, 65-85, 95-115, and 158-178; these read IALT…IGNI, GVGF…HFVD, FGLI…FFAS, LFAV…HKIF, and MSYA…MWLM. 2 consecutive RCK C-terminal domains span residues 192 to 276 and 279 to 361; these read KHES…VIGK and DTSL…VVGN. 6 consecutive transmembrane segments (helical) span residues 371 to 391, 393 to 413, 437 to 457, 464 to 484, 493 to 513, and 533 to 553; these read MLPV…PLFV, GFPV…ALIL, LGIV…FVDT, LSWI…IGLL, YLTL…LAFA, and LVMF…WGMG.

It belongs to the AAE transporter (TC 2.A.81) family. YidE subfamily.

The protein localises to the cell membrane. In Salmonella paratyphi C (strain RKS4594), this protein is Putative transport protein YidE.